The sequence spans 863 residues: MSSPTSTPSRRRNKRGRGSNPPTPHGEEVQSPPSQRRRTEDSTSIGELLPMPTSPSGDVQSPSGQELLFSSPAPSRHSAHQSELDLSSPLTYGTPSSRVEGTPRSGIRGTPARQRPDLGSARKVKQVDLHSDQPAAEELVTSEQSLGQKLVIWGTDVNVATCKEKFQRFVQRFIDPSAKEEDNVGLDLNEPIYMQRLEEINVVGDPFLNIDCDHLRNFDQDLYRQLVCYPQEVIPTFDMAANEIFFERYPDSILEHQIQVRPYNALKTRNMRSLNPEDIDQLITISGMVIRTSQIIPEMQEAFFKCQVCAFTTRVEIDRGRIAEPSVCKHCNTTHSMALIHNRSMFSDKQMIKLQESPEDMPAGQTPHTTILYGHNDLVDKVQPGDRVNVTGIYRAVPIRVNPRVRNVKSVYKTHIDVIHYRKTDSKRLHGIDEDTEQKLFTEERVAMLKELAAKPDIYERLAAALAPSIYEHEDIKKGILLQLFGGTRKDFSHTGRGKFRAEVNILLCGDPGTSKSQLLQYVFNLVPRGQYTSGKGSSAVGLTAYVMKDPETRQLVLQTGALVLSDNGICCIDEFDKMNESTRSVLHEVMEQQTLSIAKAGIICQLNARTSVLAAANPVESQWNPKKTTIENIQLPHTLLSRFDLIFLMLDPQDEAYDRRLAHHLVALYYQSEEQMKEEHLDMAVLKDYIAYARTYVNPRLSEEASQALIEAYVSMRKIGSGRGMVSAYPRQLESLIRLSEAHAKVRFSNKVETIDVEEAKRLHREALKQSATDPRTGIVDISILTTGMSATARKRKEELAQVLKKLIQSKGKTPALKYQQLFEDLRGQSDAAITKDMFDEALHALADDDYLTVTGKTVRLL.

The disordered stretch occupies residues 1-130; sequence MSSPTSTPSR…ARKVKQVDLH (130 aa). 2 stretches are compositionally biased toward polar residues: residues 54 to 64 and 84 to 99; these read SPSGDVQSPSG and LDLSSPLTYGTPSSRV. The C4-type zinc-finger motif lies at 306–331; sequence CQVCAFTTRVEIDRGRIAEPSVCKHC. One can recognise an MCM domain in the interval 458–667; it reads IYERLAAALA…YDRRLAHHLV (210 aa). ATP contacts are provided by Tyr471, Arg497, Lys516, Ser517, Asn618, Arg643, Arg732, and Glu735. Positions 642-645 match the Arginine finger motif; that stretch reads SRFD.

It belongs to the MCM family. In terms of assembly, component of the mcm2-7 complex (RLF-M). The complex forms a toroidal hexameric ring with the proposed subunit order mcm2-mcm6-mcm4-mcm7-mcm3-mcm5. The heterodimer of mmcm3/mcm5 interacts with mcm4, mmcm6, mcm7 and weakly with mcm2. Begins to associate with zmcm6 at the neurula stage. Component of the CMG helicase complex, composed of the mcm2-7 complex, the GINS complex and cdc45. In terms of processing, hyperphosphorylated during mitosis in a mechanism requiring cdc2-cyclin B and other kinases. Undergoes dephosphorylation after exiting mitosis, existing in a partially phosphorylated state in the cytosolic interphase mcm complex which associates with the pre-replication complexes (pre-Rcs). Complete dephosphorylation inactivates the mcm complex, preventing its binding to chromatin. Becomes actively phosphorylated during S phase once the mcm complex is assembled on the chromatin. This chromatin-associated phosphorylation occurs during the activation of the pre-Rcs and is independent of cdks. Phosphorylated by the cdc7-dbf4b complex.

It localises to the nucleus. The protein resides in the chromosome. The enzyme catalyses ATP + H2O = ADP + phosphate + H(+). Functionally, acts as a component of the MCM2-7 complex (MCM complex) which is the replicative helicase essential for 'once per cell cycle' DNA replication initiation and elongation in eukaryotic cells. Core component of CDC45-MCM-GINS (CMG) helicase, the molecular machine that unwinds template DNA during replication, and around which the replisome is built. The active ATPase sites in the MCM2-7 ring are formed through the interaction surfaces of two neighboring subunits such that a critical structure of a conserved arginine finger motif is provided in trans relative to the ATP-binding site of the Walker A box of the adjacent subunit. The six ATPase active sites, however, are likely to contribute differentially to the complex helicase activity. This Xenopus laevis (African clawed frog) protein is DNA replication licensing factor mcm4-B (mcm4-b).